The primary structure comprises 539 residues: Serine/threonine-protein kinase 35 (539 aa).

Positions 103–161 are disordered; it reads ITIQGPAPPHLGARRRDEARGARAAPLLLPPPPAAMETGKENGARRGTKSPERKRRSPV. Positions 148-160 are enriched in basic residues; sequence RGTKSPERKRRSP. Positions 207 to 535 constitute a Protein kinase domain; that stretch reads YSLLAEIGRG…FELETRMDQV (329 aa). ATP is bound by residues 213 to 221 and K236; that span reads IGRGSYGVV. The active-site Proton acceptor is the D365.

The protein belongs to the protein kinase superfamily. Ser/Thr protein kinase family. In terms of assembly, interacts with PDLIM1/CLP-36. In terms of processing, autophosphorylated.

It localises to the nucleus. Its subcellular location is the nucleolus. The protein localises to the cytoplasm. The catalysed reaction is L-seryl-[protein] + ATP = O-phospho-L-seryl-[protein] + ADP + H(+). It catalyses the reaction L-threonyl-[protein] + ATP = O-phospho-L-threonyl-[protein] + ADP + H(+). This is Serine/threonine-protein kinase 35 (Stk35) from Mus musculus (Mouse).